Consider the following 499-residue polypeptide: Lysine--tRNA ligase (499 aa).

The Mg(2+) site is built by Glu-408 and Glu-415.

This sequence belongs to the class-II aminoacyl-tRNA synthetase family. As to quaternary structure, homodimer. Mg(2+) is required as a cofactor.

Its subcellular location is the cytoplasm. It carries out the reaction tRNA(Lys) + L-lysine + ATP = L-lysyl-tRNA(Lys) + AMP + diphosphate. The protein is Lysine--tRNA ligase of Bacillus cereus (strain ATCC 10987 / NRS 248).